A 251-amino-acid chain; its full sequence is Ubiquinone/menaquinone biosynthesis C-methyltransferase UbiE (251 aa).

S-adenosyl-L-methionine is bound by residues Thr-74, Asp-95, Asn-123–Ala-124, and Ser-140.

Belongs to the class I-like SAM-binding methyltransferase superfamily. MenG/UbiE family.

It catalyses the reaction a 2-demethylmenaquinol + S-adenosyl-L-methionine = a menaquinol + S-adenosyl-L-homocysteine + H(+). The enzyme catalyses a 2-methoxy-6-(all-trans-polyprenyl)benzene-1,4-diol + S-adenosyl-L-methionine = a 5-methoxy-2-methyl-3-(all-trans-polyprenyl)benzene-1,4-diol + S-adenosyl-L-homocysteine + H(+). It participates in quinol/quinone metabolism; menaquinone biosynthesis; menaquinol from 1,4-dihydroxy-2-naphthoate: step 2/2. Its pathway is cofactor biosynthesis; ubiquinone biosynthesis. In terms of biological role, methyltransferase required for the conversion of demethylmenaquinol (DMKH2) to menaquinol (MKH2) and the conversion of 2-polyprenyl-6-methoxy-1,4-benzoquinol (DDMQH2) to 2-polyprenyl-3-methyl-6-methoxy-1,4-benzoquinol (DMQH2). In Enterobacter sp. (strain 638), this protein is Ubiquinone/menaquinone biosynthesis C-methyltransferase UbiE.